Reading from the N-terminus, the 429-residue chain is UDP-N-acetylglucosamine 1-carboxyvinyltransferase (429 aa).

Phosphoenolpyruvate is bound at residue 22–23 (KN). Arg-102 serves as a coordination point for UDP-N-acetyl-alpha-D-glucosamine. Catalysis depends on Cys-126, which acts as the Proton donor. 2-(S-cysteinyl)pyruvic acid O-phosphothioketal is present on Cys-126. UDP-N-acetyl-alpha-D-glucosamine is bound by residues 131–135 (RPVDL), Asp-316, and Ile-338.

This sequence belongs to the EPSP synthase family. MurA subfamily.

It localises to the cytoplasm. It carries out the reaction phosphoenolpyruvate + UDP-N-acetyl-alpha-D-glucosamine = UDP-N-acetyl-3-O-(1-carboxyvinyl)-alpha-D-glucosamine + phosphate. It functions in the pathway cell wall biogenesis; peptidoglycan biosynthesis. Its function is as follows. Cell wall formation. Adds enolpyruvyl to UDP-N-acetylglucosamine. In Rhodopseudomonas palustris (strain TIE-1), this protein is UDP-N-acetylglucosamine 1-carboxyvinyltransferase.